The chain runs to 272 residues: Putative phosphoenolpyruvate synthase regulatory protein (272 aa).

An ADP-binding site is contributed by 152–159; sequence GVSRCGKT.

It belongs to the pyruvate, phosphate/water dikinase regulatory protein family. PSRP subfamily.

The enzyme catalyses [pyruvate, water dikinase] + ADP = [pyruvate, water dikinase]-phosphate + AMP + H(+). It carries out the reaction [pyruvate, water dikinase]-phosphate + phosphate + H(+) = [pyruvate, water dikinase] + diphosphate. In terms of biological role, bifunctional serine/threonine kinase and phosphorylase involved in the regulation of the phosphoenolpyruvate synthase (PEPS) by catalyzing its phosphorylation/dephosphorylation. This Pseudomonas putida (strain GB-1) protein is Putative phosphoenolpyruvate synthase regulatory protein.